Reading from the N-terminus, the 209-residue chain is Glutathione S-transferase F7 (209 aa).

Positions 2–83 (AGIKVFGHPA…YIAHFYSDKG (82 aa)) constitute a GST N-terminal domain. Residues 12–13 (ST), 41–42 (HK), 54–55 (KV), and 67–68 (ES) each bind glutathione. Residues 90 to 209 (GSKDIAGIAM…TSRPSAKKVL (120 aa)) enclose the GST C-terminal domain.

Belongs to the GST superfamily. Phi family.

It localises to the cytoplasm. It is found in the cytosol. It catalyses the reaction RX + glutathione = an S-substituted glutathione + a halide anion + H(+). May be involved in the conjugation of reduced glutathione to a wide number of exogenous and endogenous hydrophobic electrophiles and have a detoxification role against certain herbicides. The protein is Glutathione S-transferase F7 of Arabidopsis thaliana (Mouse-ear cress).